The following is a 309-amino-acid chain: Porphobilinogen deaminase (309 aa).

An S-(dipyrrolylmethanemethyl)cysteine modification is found at Cys241.

This sequence belongs to the HMBS family. In terms of assembly, monomer. Dipyrromethane serves as cofactor.

The catalysed reaction is 4 porphobilinogen + H2O = hydroxymethylbilane + 4 NH4(+). Its pathway is porphyrin-containing compound metabolism; protoporphyrin-IX biosynthesis; coproporphyrinogen-III from 5-aminolevulinate: step 2/4. Tetrapolymerization of the monopyrrole PBG into the hydroxymethylbilane pre-uroporphyrinogen in several discrete steps. In Oceanobacillus iheyensis (strain DSM 14371 / CIP 107618 / JCM 11309 / KCTC 3954 / HTE831), this protein is Porphobilinogen deaminase.